A 108-amino-acid polypeptide reads, in one-letter code: Urease subunit gamma (108 aa).

This sequence belongs to the urease gamma subunit family. In terms of assembly, heterotrimer of UreA (gamma), UreB (beta) and UreC (alpha) subunits. Three heterotrimers associate to form the active enzyme.

The protein resides in the cytoplasm. It carries out the reaction urea + 2 H2O + H(+) = hydrogencarbonate + 2 NH4(+). The protein operates within nitrogen metabolism; urea degradation; CO(2) and NH(3) from urea (urease route): step 1/1. This is Urease subunit gamma from Trichodesmium erythraeum (strain IMS101).